The following is a 127-amino-acid chain: MARISGVDLPRDKRVEIGLTYLYGIGLSRSQEILAETGVNPDTRVRDLSDEDVAKLRAYIENNYQIEGDLRRWEAMNIKRLADIGTYRGRRHRQGLPVRGQRTRTNGRTRRGRRVTVAGKKKAPAKK.

Residues 93 to 127 (RQGLPVRGQRTRTNGRTRRGRRVTVAGKKKAPAKK) form a disordered region. Positions 101-127 (QRTRTNGRTRRGRRVTVAGKKKAPAKK) are enriched in basic residues.

This sequence belongs to the universal ribosomal protein uS13 family. As to quaternary structure, part of the 30S ribosomal subunit. Forms a loose heterodimer with protein S19. Forms two bridges to the 50S subunit in the 70S ribosome.

Functionally, located at the top of the head of the 30S subunit, it contacts several helices of the 16S rRNA. In the 70S ribosome it contacts the 23S rRNA (bridge B1a) and protein L5 of the 50S subunit (bridge B1b), connecting the 2 subunits; these bridges are implicated in subunit movement. Contacts the tRNAs in the A and P-sites. In Crocosphaera subtropica (strain ATCC 51142 / BH68) (Cyanothece sp. (strain ATCC 51142)), this protein is Small ribosomal subunit protein uS13.